The primary structure comprises 67 residues: Bowman-Birk type proteinase inhibitor A4 (67 aa).

Disulfide bonds link cysteine 10-cysteine 29, cysteine 16-cysteine 27, cysteine 36-cysteine 43, and cysteine 40-cysteine 57.

The protein belongs to the Bowman-Birk serine protease inhibitor family. Expressed in bulb (at protein level).

In terms of biological role, serine protease inhibitor. Inhibits trypsin (Ki=12nM) and weakly inhibits chymotrypsin with (Ki=460nm). Does not inhibit bacterial subtilisin. The protein is Bowman-Birk type proteinase inhibitor A4 of Hyacinthus orientalis (Common hyacinth).